The sequence spans 492 residues: NAD(P)H-quinone oxidoreductase subunit 2 A, chloroplastic (492 aa).

13 helical membrane passes run 6 to 26, 39 to 59, 81 to 101, 106 to 126, 131 to 151, 165 to 185, 209 to 229, 277 to 297, 305 to 325, 336 to 356, 377 to 397, 400 to 420, and 464 to 484; these read LLLF…GLIL, ISWF…ALLF, IFQF…VEYI, MAIT…MFLC, LITI…LSGY, YLLM…WLYG, PGIL…LSPA, WHLL…LIAI, MLAY…IVGD, YMLF…SFGL, ALSL…AGFF, LHLF…IGLL, and FSMI…NPII.

This sequence belongs to the complex I subunit 2 family. As to quaternary structure, NDH is composed of at least 16 different subunits, 5 of which are encoded in the nucleus.

Its subcellular location is the plastid. The protein localises to the chloroplast thylakoid membrane. It catalyses the reaction a plastoquinone + NADH + (n+1) H(+)(in) = a plastoquinol + NAD(+) + n H(+)(out). The catalysed reaction is a plastoquinone + NADPH + (n+1) H(+)(in) = a plastoquinol + NADP(+) + n H(+)(out). Functionally, NDH shuttles electrons from NAD(P)H:plastoquinone, via FMN and iron-sulfur (Fe-S) centers, to quinones in the photosynthetic chain and possibly in a chloroplast respiratory chain. The immediate electron acceptor for the enzyme in this species is believed to be plastoquinone. Couples the redox reaction to proton translocation, and thus conserves the redox energy in a proton gradient. This Phaseolus vulgaris (Kidney bean) protein is NAD(P)H-quinone oxidoreductase subunit 2 A, chloroplastic.